The chain runs to 336 residues: 7,8-didemethyl-8-hydroxy-5-deazariboflavin synthase (336 aa).

The Radical SAM core domain occupies 18-249 (ITYSPAYTLV…TSIAIQVPPN (232 aa)). Cys32, Cys36, and Cys39 together coordinate [4Fe-4S] cluster.

This sequence belongs to the radical SAM superfamily. CofG family. In terms of assembly, consists of two subunits, CofG and CofH. Requires [4Fe-4S] cluster as cofactor.

The catalysed reaction is 5-amino-5-(4-hydroxybenzyl)-6-(D-ribitylimino)-5,6-dihydrouracil + S-adenosyl-L-methionine = 7,8-didemethyl-8-hydroxy-5-deazariboflavin + 5'-deoxyadenosine + L-methionine + NH4(+) + H(+). The protein operates within cofactor biosynthesis; coenzyme F0 biosynthesis. Its function is as follows. Catalyzes the radical-mediated synthesis of 7,8-didemethyl-8-hydroxy-5-deazariboflavin from 5-amino-5-(4-hydroxybenzyl)-6-(D-ribitylimino)-5,6-dihydrouracil. The chain is 7,8-didemethyl-8-hydroxy-5-deazariboflavin synthase from Synechococcus elongatus (strain ATCC 33912 / PCC 7942 / FACHB-805) (Anacystis nidulans R2).